A 188-amino-acid polypeptide reads, in one-letter code: GMP synthase [glutamine-hydrolyzing] subunit A (188 aa).

The 188-residue stretch at 1-188 (MIVIMDNGGQ…RNFAKLCGEL (188 aa)) folds into the Glutamine amidotransferase type-1 domain. Cys78 acts as the Nucleophile in catalysis. Active-site residues include His165 and Glu167.

As to quaternary structure, heterodimer composed of a glutamine amidotransferase subunit (A) and a GMP-binding subunit (B).

It carries out the reaction XMP + L-glutamine + ATP + H2O = GMP + L-glutamate + AMP + diphosphate + 2 H(+). The protein operates within purine metabolism; GMP biosynthesis; GMP from XMP (L-Gln route): step 1/1. Functionally, catalyzes the synthesis of GMP from XMP. This Pyrococcus abyssi (strain GE5 / Orsay) protein is GMP synthase [glutamine-hydrolyzing] subunit A.